A 411-amino-acid polypeptide reads, in one-letter code: Kelch domain-containing protein 10 (411 aa).

Kelch repeat units lie at residues 72–133 (NLYV…LHGH), 135–186 (LLVF…IIHG), 187–239 (FLYV…HDGQ), 240–288 (RIYV…RRCH), 296–342 (EVFI…AVTP), and 345–388 (CMYI…YFPH).

Belongs to the KLHDC10 family. Component of a CRL2 E3 ubiquitin-protein ligase complex, also named ECS (Elongin BC-CUL2/5-SOCS-box protein) complex, composed of CUL2, Elongin BC (ELOB and ELOC), RBX1 and substrate-specific adapter KLHDC10.

The protein operates within protein modification; protein ubiquitination. In terms of biological role, substrate-recognition component of a Cul2-RING (CRL2) E3 ubiquitin-protein ligase complex of the DesCEND (destruction via C-end degrons) pathway, which recognizes a C-degron located at the extreme C terminus of target proteins, leading to their ubiquitination and degradation. The C-degron recognized by the DesCEND pathway is usually a motif of less than ten residues and can be present in full-length proteins, truncated proteins or proteolytically cleaved forms. The CRL2(KLHDC10) complex specifically recognizes proteins with a proline-glycine (Pro-Gly) or an alanine tail (CAT tail) at the C-terminus, leading to their ubiquitination and degradation. The CRL2(KLHDC10) complex is involved in the ribosome-associated quality control (RQC) pathway, which mediates the extraction of incompletely synthesized nascent chains from stalled ribosomes: CRL2(KLHDC10) acts downstream of NEMF and recognizes CAT tails associated with stalled nascent chains, leading to their ubiquitination and degradation. The sequence is that of Kelch domain-containing protein 10 from Xenopus tropicalis (Western clawed frog).